The primary structure comprises 85 residues: Putative regulatory protein THEYE_A0405 (85 aa).

This sequence belongs to the RemA family.

This chain is Putative regulatory protein THEYE_A0405, found in Thermodesulfovibrio yellowstonii (strain ATCC 51303 / DSM 11347 / YP87).